Consider the following 290-residue polypeptide: tRNA (guanine-N(7)-)-methyltransferase (290 aa).

Basic and acidic residues-rich tracts occupy residues 1–12 (MSDSLHTPEEPR) and 20–43 (AHAH…DGPK). A disordered region spans residues 1 to 49 (MSDSLHTPEEPRPGPGEQLAHAHDGSLRHTRAKGEPRFPDGPKADPAGS). Positions 104, 129, 156, and 179 each coordinate S-adenosyl-L-methionine. Residue Asp-179 is part of the active site. Substrate-binding positions include Lys-183, Asp-215, and 252–255 (TRFE).

This sequence belongs to the class I-like SAM-binding methyltransferase superfamily. TrmB family.

It catalyses the reaction guanosine(46) in tRNA + S-adenosyl-L-methionine = N(7)-methylguanosine(46) in tRNA + S-adenosyl-L-homocysteine. It participates in tRNA modification; N(7)-methylguanine-tRNA biosynthesis. Catalyzes the formation of N(7)-methylguanine at position 46 (m7G46) in tRNA. This is tRNA (guanine-N(7)-)-methyltransferase from Streptomyces avermitilis (strain ATCC 31267 / DSM 46492 / JCM 5070 / NBRC 14893 / NCIMB 12804 / NRRL 8165 / MA-4680).